We begin with the raw amino-acid sequence, 206 residues long: ATP-dependent Clp protease proteolytic subunit 2 (206 aa).

The active-site Nucleophile is S100. Residue H125 is part of the active site.

It belongs to the peptidase S14 family. Fourteen ClpP subunits assemble into 2 heptameric rings which stack back to back to give a disk-like structure with a central cavity, resembling the structure of eukaryotic proteasomes.

Its subcellular location is the cytoplasm. It catalyses the reaction Hydrolysis of proteins to small peptides in the presence of ATP and magnesium. alpha-casein is the usual test substrate. In the absence of ATP, only oligopeptides shorter than five residues are hydrolyzed (such as succinyl-Leu-Tyr-|-NHMec, and Leu-Tyr-Leu-|-Tyr-Trp, in which cleavage of the -Tyr-|-Leu- and -Tyr-|-Trp bonds also occurs).. Cleaves peptides in various proteins in a process that requires ATP hydrolysis. Has a chymotrypsin-like activity. Plays a major role in the degradation of misfolded proteins. The protein is ATP-dependent Clp protease proteolytic subunit 2 of Myxococcus xanthus.